Reading from the N-terminus, the 247-residue chain is tRNA pseudouridine synthase A (247 aa).

D52 acts as the Nucleophile in catalysis. A substrate-binding site is contributed by Y113.

It belongs to the tRNA pseudouridine synthase TruA family. Homodimer.

It carries out the reaction uridine(38/39/40) in tRNA = pseudouridine(38/39/40) in tRNA. Functionally, formation of pseudouridine at positions 38, 39 and 40 in the anticodon stem and loop of transfer RNAs. This is tRNA pseudouridine synthase A from Bartonella quintana (strain Toulouse) (Rochalimaea quintana).